The chain runs to 432 residues: 3-phosphoshikimate 1-carboxyvinyltransferase (432 aa).

3-phosphoshikimate-binding residues include lysine 22, serine 23, and arginine 27. Position 22 (lysine 22) interacts with phosphoenolpyruvate. The phosphoenolpyruvate site is built by glycine 96 and arginine 127. 3-phosphoshikimate is bound by residues serine 173, serine 174, glutamine 175, serine 201, aspartate 316, asparagine 339, and lysine 343. Glutamine 175 contributes to the phosphoenolpyruvate binding site. The Proton acceptor role is filled by aspartate 316. Phosphoenolpyruvate is bound by residues arginine 347, arginine 391, and lysine 416.

Belongs to the EPSP synthase family. In terms of assembly, monomer.

Its subcellular location is the cytoplasm. It catalyses the reaction 3-phosphoshikimate + phosphoenolpyruvate = 5-O-(1-carboxyvinyl)-3-phosphoshikimate + phosphate. It participates in metabolic intermediate biosynthesis; chorismate biosynthesis; chorismate from D-erythrose 4-phosphate and phosphoenolpyruvate: step 6/7. Its function is as follows. Catalyzes the transfer of the enolpyruvyl moiety of phosphoenolpyruvate (PEP) to the 5-hydroxyl of shikimate-3-phosphate (S3P) to produce enolpyruvyl shikimate-3-phosphate and inorganic phosphate. This chain is 3-phosphoshikimate 1-carboxyvinyltransferase, found in Haemophilus influenzae (strain PittGG).